The sequence spans 396 residues: MSAEMTDLNFAEGRPLMTDKEDGITVLLQEYVTQEHDIETAHGIVHVTMCGTPKLNRPVILTYHDIGLNHKTCFNSLFNFEDMHEISQHFSVCHVDAPGQQEGAASFPAGYMYPSMDQLAEMLPGVVQQLGLRTVMGLGIGAGAYILTRFALNHPSMVEGLVLININPCAEGWMDWAATKISGWTNALPDMVISHLFSKDEVHSNPELVETYRQHILHDINQNNVQHFVKSYNSRRDLEIERPIPGTNAVTLKCPALLVVGDSSPAVDAVVECNSKLDPTKTTLLKMSDCGGFPQVIQPAKLAEAFKYFVQGMGYMPAASMTRLMRSRTGSAASSSSQDGNRSRSHTNEGSRSRSHTGDGNRSRAHTGDGNRSRSHTDTNNINSDQNSPKSMEVSC.

Residues 326–396 (RSRTGSAASS…NSPKSMEVSC (71 aa)) are disordered. Positions 327–340 (SRTGSAASSSSQDG) are enriched in low complexity. 4 repeat units span residues 340–349 (GNRSRSHTNE), 350–359 (GSRSRSHTGD), 360–369 (GNRSRAHTGD), and 370–379 (GNRSRSHTDT). Residues 340–379 (GNRSRSHTNEGSRSRSHTGDGNRSRAHTGDGNRSRSHTDT) are 4 X 10 AA tandem repeats of G-[NS]-R-S-R-[AS]-H-T-[DGN]-[DET]. Residues 346-377 (HTNEGSRSRSHTGDGNRSRAHTGDGNRSRSHT) are compositionally biased toward basic and acidic residues. The segment covering 378-390 (DTNNINSDQNSPK) has biased composition (polar residues).

Belongs to the NDRG family.

Functionally, may be involved in pronephros development, after specification of the pronephros. The chain is Protein NDRG1-A (ndrg1-a) from Xenopus laevis (African clawed frog).